Reading from the N-terminus, the 1234-residue chain is 1-phosphatidylinositol 4,5-bisphosphate phosphodiesterase beta-3 (1234 aa).

Ala2 carries the N-acetylalanine modification. The region spanning 315–466 (MDMTQPLSAY…LMGRILVKNK (152 aa)) is the PI-PLC X-box domain. Residues His330 and His377 contribute to the active site. The disordered stretch occupies residues 465 to 586 (NKKRHRPSTG…GTASSEVNAT (122 aa)). Residues Ser472, Ser488, Ser493, and Ser535 each carry the phosphoserine modification. Residues 486-513 (EQSNSALSESSAATEPSSPQLGSPSSDS) are compositionally biased toward low complexity. Residues 554 to 566 (REDEEEDEEEEET) are compositionally biased toward acidic residues. The span at 577-586 (GTASSEVNAT) shows a compositional bias: polar residues. Residues 589–705 (MSTLVNYVEP…GYLLKPEFMR (117 aa)) enclose the PI-PLC Y-box domain. The region spanning 706-834 (RPDKSFDPFT…RNEANQPLCL (129 aa)) is the C2 domain. Residues 886-907 (ASTEMCQETPSQQQGSQLSSNP) show a composition bias toward polar residues. The segment at 886 to 936 (ASTEMCQETPSQQQGSQLSSNPVPNPLDDSPRWPPGPTTSPTSTSLSSPGQ) is disordered. Residues 924-934 (TSPTSTSLSSP) are compositionally biased toward low complexity. A phosphoserine mark is found at Ser925 and Ser1105. The disordered stretch occupies residues 1196–1234 (SEGLGDGPLVACASNGHAAGSGGHQSGADSESQEENTQL). Residues 1231-1234 (NTQL) are interaction with SHANK2.

Interacts with LPAR2. Interacts with SHANK2. The cofactor is Ca(2+). Expressed in parotid gland, brain, liver, uterus, lung, heart, adrenal gland, and ovary. Not detected in spleen, pancreas, intestine, thymus or kidney.

Its subcellular location is the cytoplasm. The protein localises to the membrane. It is found in the nucleus. The enzyme catalyses a 1,2-diacyl-sn-glycero-3-phospho-(1D-myo-inositol-4,5-bisphosphate) + H2O = 1D-myo-inositol 1,4,5-trisphosphate + a 1,2-diacyl-sn-glycerol + H(+). The catalysed reaction is a 1,2-diacyl-sn-glycero-3-phospho-(1D-myo-inositol) + H2O = 1D-myo-inositol 1-phosphate + a 1,2-diacyl-sn-glycerol + H(+). Its activity is regulated as follows. Activated by G(q)/G(11) G alpha proteins in response to ligand-binding to G protein-coupled receptors. Catalyzes the production of the second messenger molecules diacylglycerol (DAG) and inositol 1,4,5-trisphosphate (IP3). Key transducer of G protein-coupled receptor signaling: activated by G(q)/G(11) G alpha proteins downstream of G protein-coupled receptors activation. In neutrophils, participates in a phospholipase C-activating N-formyl peptide-activated GPCR (G protein-coupled receptor) signaling pathway by promoting RASGRP4 activation by DAG, to promote neutrophil functional responses. The chain is 1-phosphatidylinositol 4,5-bisphosphate phosphodiesterase beta-3 from Rattus norvegicus (Rat).